The sequence spans 572 residues: Urease subunit alpha (572 aa).

One can recognise a Urease domain in the interval 134 to 572 (GGIDSHIHFI…LPLAQRYFLF (439 aa)). Residues His-139, His-141, and Lys-222 each coordinate Ni(2+). Lys-222 is subject to N6-carboxylysine. His-224 lines the substrate pocket. The Ni(2+) site is built by His-251 and His-277. The Proton donor role is filled by His-325. Asp-365 serves as a coordination point for Ni(2+).

It belongs to the metallo-dependent hydrolases superfamily. Urease alpha subunit family. Heterotrimer of UreA (gamma), UreB (beta) and UreC (alpha) subunits. Three heterotrimers associate to form the active enzyme. Requires Ni cation as cofactor. In terms of processing, carboxylation allows a single lysine to coordinate two nickel ions.

Its subcellular location is the cytoplasm. The enzyme catalyses urea + 2 H2O + H(+) = hydrogencarbonate + 2 NH4(+). Its pathway is nitrogen metabolism; urea degradation; CO(2) and NH(3) from urea (urease route): step 1/1. The polypeptide is Urease subunit alpha (Paracidovorax citrulli (strain AAC00-1) (Acidovorax citrulli)).